Reading from the N-terminus, the 601-residue chain is Putative Lon protease homolog (601 aa).

The region spanning 363 to 560 is the Lon proteolytic domain; that stretch reads GEIVGQINGL…YQACELLFGR (198 aa). Active-site residues include S455 and K498.

The protein belongs to the peptidase S16 family.

The protein is Putative Lon protease homolog of Haemophilus influenzae (strain ATCC 51907 / DSM 11121 / KW20 / Rd).